The chain runs to 267 residues: Outer membrane protein assembly factor BamD (267 aa).

Residues methionine 1 to alanine 16 form the signal peptide. A lipid anchor (N-palmitoyl cysteine) is attached at cysteine 17. A lipid anchor (S-diacylglycerol cysteine) is attached at cysteine 17.

It belongs to the BamD family. In terms of assembly, part of the Bam complex.

The protein resides in the cell outer membrane. Part of the outer membrane protein assembly complex, which is involved in assembly and insertion of beta-barrel proteins into the outer membrane. Required for efficient transformation of Neisseria meningitidis by species-related DNA. In Neisseria meningitidis serogroup A / serotype 4A (strain DSM 15465 / Z2491), this protein is Outer membrane protein assembly factor BamD.